A 568-amino-acid polypeptide reads, in one-letter code: Sulfite reductase [NADPH] hemoprotein beta-component (568 aa).

[4Fe-4S] cluster contacts are provided by cysteine 425, cysteine 431, cysteine 470, and cysteine 474. Position 474 (cysteine 474) interacts with siroheme.

Belongs to the nitrite and sulfite reductase 4Fe-4S domain family. In terms of assembly, alpha(8)-beta(8). The alpha component is a flavoprotein, the beta component is a hemoprotein. Siroheme is required as a cofactor. [4Fe-4S] cluster serves as cofactor.

The enzyme catalyses hydrogen sulfide + 3 NADP(+) + 3 H2O = sulfite + 3 NADPH + 4 H(+). Its pathway is sulfur metabolism; hydrogen sulfide biosynthesis; hydrogen sulfide from sulfite (NADPH route): step 1/1. Its function is as follows. Component of the sulfite reductase complex that catalyzes the 6-electron reduction of sulfite to sulfide. This is one of several activities required for the biosynthesis of L-cysteine from sulfate. This is Sulfite reductase [NADPH] hemoprotein beta-component from Xanthomonas euvesicatoria pv. vesicatoria (strain 85-10) (Xanthomonas campestris pv. vesicatoria).